We begin with the raw amino-acid sequence, 309 residues long: Homoserine kinase (309 aa).

91–101 (PIGSGLGSSAC) lines the ATP pocket.

This sequence belongs to the GHMP kinase family. Homoserine kinase subfamily.

The protein localises to the cytoplasm. It carries out the reaction L-homoserine + ATP = O-phospho-L-homoserine + ADP + H(+). The protein operates within amino-acid biosynthesis; L-threonine biosynthesis; L-threonine from L-aspartate: step 4/5. In terms of biological role, catalyzes the ATP-dependent phosphorylation of L-homoserine to L-homoserine phosphate. The chain is Homoserine kinase from Photorhabdus laumondii subsp. laumondii (strain DSM 15139 / CIP 105565 / TT01) (Photorhabdus luminescens subsp. laumondii).